Consider the following 233-residue polypeptide: 5'-methylthioadenosine/S-adenosylhomocysteine nucleosidase (233 aa).

The active-site Proton acceptor is the glutamate 12. Substrate is bound by residues glycine 78, isoleucine 152, and 173–174 (ME). Catalysis depends on aspartate 197, which acts as the Proton donor.

The protein belongs to the PNP/UDP phosphorylase family. MtnN subfamily. Homodimer.

The enzyme catalyses S-adenosyl-L-homocysteine + H2O = S-(5-deoxy-D-ribos-5-yl)-L-homocysteine + adenine. The catalysed reaction is S-methyl-5'-thioadenosine + H2O = 5-(methylsulfanyl)-D-ribose + adenine. It carries out the reaction 5'-deoxyadenosine + H2O = 5-deoxy-D-ribose + adenine. It functions in the pathway amino-acid biosynthesis; L-methionine biosynthesis via salvage pathway; S-methyl-5-thio-alpha-D-ribose 1-phosphate from S-methyl-5'-thioadenosine (hydrolase route): step 1/2. Its function is as follows. Catalyzes the irreversible cleavage of the glycosidic bond in both 5'-methylthioadenosine (MTA) and S-adenosylhomocysteine (SAH/AdoHcy) to adenine and the corresponding thioribose, 5'-methylthioribose and S-ribosylhomocysteine, respectively. Also cleaves 5'-deoxyadenosine, a toxic by-product of radical S-adenosylmethionine (SAM) enzymes, into 5-deoxyribose and adenine. Thus, is required for in vivo function of the radical SAM enzymes biotin synthase and lipoic acid synthase, that are inhibited by 5'-deoxyadenosine accumulation. This Yersinia pestis bv. Antiqua (strain Angola) protein is 5'-methylthioadenosine/S-adenosylhomocysteine nucleosidase.